Reading from the N-terminus, the 102-residue chain is UV-induced protein uvi31 (102 aa).

This sequence belongs to the BolA/IbaG family.

The protein resides in the mitochondrion matrix. It localises to the cytoplasm. It is found in the nucleus. Acts as a mitochondrial iron-sulfur (Fe-S) cluster assembly factor that facilitates [4Fe-4S] cluster insertion into a subset of mitochondrial proteins such as lipoyl synthase (LS) and succinate dehydrogenase (SDH). Required during the last step of iron-sulfur protein assembly when the iron-sulfur cluster is inserted into the target protein. Probably acts together with the monothiol glutaredoxin grx5. Not required for [2Fe-2S] cluster insertion into mitochondrial proteins. May be involved in control of cell division, especially during the resumption from cell cycle arrest. The sequence is that of UV-induced protein uvi31 from Schizosaccharomyces pombe (strain 972 / ATCC 24843) (Fission yeast).